We begin with the raw amino-acid sequence, 122 residues long: Photosystem II extrinsic protein U (122 aa).

A signal peptide spans 1 to 26 (MKTIVRLFAILMVLISSVGFVGSAVA).

Belongs to the PsbU family. PSII is composed of 1 copy each of membrane proteins PsbA, PsbB, PsbC, PsbD, PsbE, PsbF, PsbH, PsbI, PsbJ, PsbK, PsbL, PsbM, PsbT, PsbX, PsbY, PsbZ, Psb30/Ycf12, peripheral proteins PsbO, CyanoQ (PsbQ), PsbU, PsbV and a large number of cofactors. It forms dimeric complexes.

The protein localises to the cellular thylakoid membrane. Its function is as follows. One of the extrinsic, lumenal subunits of photosystem II (PSII). PSII is a light-driven water plastoquinone oxidoreductase, using light energy to abstract electrons from H(2)O, generating a proton gradient subsequently used for ATP formation. The extrinsic proteins stabilize the structure of photosystem II oxygen-evolving complex (OEC), the ion environment of oxygen evolution and protect the OEC against heat-induced inactivation. This is Photosystem II extrinsic protein U from Crocosphaera subtropica (strain ATCC 51142 / BH68) (Cyanothece sp. (strain ATCC 51142)).